The chain runs to 387 residues: Alkanesulfonate monooxygenase (387 aa).

The protein belongs to the SsuD family.

The catalysed reaction is an alkanesulfonate + FMNH2 + O2 = an aldehyde + FMN + sulfite + H2O + 2 H(+). Functionally, catalyzes the desulfonation of aliphatic sulfonates. The protein is Alkanesulfonate monooxygenase of Cupriavidus pinatubonensis (strain JMP 134 / LMG 1197) (Cupriavidus necator (strain JMP 134)).